The chain runs to 321 residues: G-protein coupled receptor aex-2 (321 aa).

The Extracellular portion of the chain corresponds to 1–24; sequence MNSTDIIANVTKPFVENLTLGETA. 3 N-linked (GlcNAc...) asparagine glycosylation sites follow: N2, N9, and N17. Residues 25-45 traverse the membrane as a helical segment; the sequence is FYISCGIVGTVFNALVLWIAL. At 46-55 the chain is on the cytoplasmic side; that stretch reads TYINTEDKPR. Residues 56–76 traverse the membrane as a helical segment; the sequence is QIIVINMTVADLLMCIVYMKT. Residues 77-90 lie on the Extracellular side of the membrane; the sequence is RPWLSHFNLWLCHP. The cysteines at positions 88 and 161 are disulfide-linked. The chain crosses the membrane as a helical span at residues 91-111; sequence YYVIIWTCQMCSCLNLVWLNV. Residues 112-132 lie on the Cytoplasmic side of the membrane; that stretch reads DKLIYIQFPLHYYQIVNRKRL. The chain crosses the membrane as a helical span at residues 133–153; that stretch reads LWITAATWGGLYAMNIALVTF. Residues 154–175 lie on the Extracellular side of the membrane; sequence LKITRGSCLGVSLNPYVYLLSP. A helical membrane pass occupies residues 176–196; it reads IFYVVMILTSFSLSALIYCIA. Over 197-221 the chain is Cytoplasmic; that stretch reads HNLTHMEERQRSKLFRRLFFLFSST. A helical transmembrane segment spans residues 222–242; it reads LWTFFTCLPYRLLYLFSIFCG. Topologically, residues 243–254 are extracellular; the sequence is ETCQINNYYKTA. A helical membrane pass occupies residues 255 to 275; that stretch reads TNLFFRLLIVGIMINPVITIW. Residues 276–321 are Cytoplasmic-facing; sequence TQRIYRLRLMRMFGRLRENSSTEVLMVSNRRASERPPEHTPLRCDM.

This sequence belongs to the G-protein coupled receptor 1 family. In terms of tissue distribution, expressed in the intestinal muscle, anal depressor, AVL and DVB GABAergic neurons, enteric muscles, the nerve ring, the ventral nerve cord and head mesodermal cells.

The protein localises to the cell membrane. Its subcellular location is the cell projection. It is found in the cilium. G-protein coupled receptor for the nlp-40 neuropeptide. The activity of this receptor is mediated by G proteins which activate adenylyl cyclase. Plays a role in the defecation motor program, which is a coordinated series of three muscle contractions that occurs every 45 seconds. Specifically, acts in GABAergic neurons, such as AVL and DVB, to control the expulsion step of defecation. Required for fatty acid uptake and metabolism by intestinal cells and therefore regulates the levels of triglycerides in the intestine. This is G-protein coupled receptor aex-2 from Caenorhabditis elegans.